The primary structure comprises 197 residues: Phosphoheptose isomerase (197 aa).

One can recognise an SIS domain in the interval 34–196 (MVHCLLGGNK…DRTLFPQDEQ (163 aa)). Substrate is bound at residue 49–51 (NGG). Zn(2+)-binding residues include histidine 58 and glutamate 62. Substrate is bound by residues glutamate 62, 91 to 92 (ND), 117 to 119 (STS), serine 122, and glutamine 172. The Zn(2+) site is built by glutamine 172 and histidine 180.

This sequence belongs to the SIS family. GmhA subfamily. In terms of assembly, homotetramer. Zn(2+) serves as cofactor.

Its subcellular location is the cytoplasm. The enzyme catalyses 2 D-sedoheptulose 7-phosphate = D-glycero-alpha-D-manno-heptose 7-phosphate + D-glycero-beta-D-manno-heptose 7-phosphate. The protein operates within carbohydrate biosynthesis; D-glycero-D-manno-heptose 7-phosphate biosynthesis; D-glycero-alpha-D-manno-heptose 7-phosphate and D-glycero-beta-D-manno-heptose 7-phosphate from sedoheptulose 7-phosphate: step 1/1. In terms of biological role, catalyzes the isomerization of sedoheptulose 7-phosphate in D-glycero-D-manno-heptose 7-phosphate. This chain is Phosphoheptose isomerase, found in Shewanella baltica (strain OS223).